We begin with the raw amino-acid sequence, 400 residues long: Tryptophan synthase beta chain (400 aa).

Position 92 is an N6-(pyridoxal phosphate)lysine (K92).

The protein belongs to the TrpB family. As to quaternary structure, tetramer of two alpha and two beta chains. Pyridoxal 5'-phosphate is required as a cofactor.

It catalyses the reaction (1S,2R)-1-C-(indol-3-yl)glycerol 3-phosphate + L-serine = D-glyceraldehyde 3-phosphate + L-tryptophan + H2O. It participates in amino-acid biosynthesis; L-tryptophan biosynthesis; L-tryptophan from chorismate: step 5/5. Its function is as follows. The beta subunit is responsible for the synthesis of L-tryptophan from indole and L-serine. This chain is Tryptophan synthase beta chain, found in Neisseria gonorrhoeae (strain NCCP11945).